The chain runs to 322 residues: D-alanine--D-alanine ligase (322 aa).

Residues 110–310 enclose the ATP-grasp domain; sequence KAVLAAAGIP…FDRLVFWIVE (201 aa). 137–191 contacts ATP; sequence MPPPYVVKPNAEGSSVGVSLVFEGANGPPRQLAAPDWAFGEQVMVEPYIPGLELA. Residues Asp263, Glu277, and Asn279 each contribute to the Mg(2+) site.

The protein belongs to the D-alanine--D-alanine ligase family. It depends on Mg(2+) as a cofactor. The cofactor is Mn(2+).

It is found in the cytoplasm. The enzyme catalyses 2 D-alanine + ATP = D-alanyl-D-alanine + ADP + phosphate + H(+). The protein operates within cell wall biogenesis; peptidoglycan biosynthesis. Its function is as follows. Cell wall formation. The chain is D-alanine--D-alanine ligase from Caulobacter sp. (strain K31).